The chain runs to 201 residues: ADP-ribosylation factor-related protein 1 (201 aa).

Residue methionine 1 is modified to N-acetylmethionine. GTP contacts are provided by residues 24-31, 75-79, and 134-137; these read GLDNAGKT, DLGGQ, and NKQD.

This sequence belongs to the small GTPase superfamily. Arf family. Interacts with SYS1.

It is found in the golgi apparatus. Its subcellular location is the trans-Golgi network. Trans-Golgi-associated GTPase that regulates protein sorting. Controls the targeting of ARL1 and its effector to the trans-Golgi. Required for the lipidation of chylomicrons in the intestine and required for VLDL lipidation in the liver. This Pongo abelii (Sumatran orangutan) protein is ADP-ribosylation factor-related protein 1 (ARFRP1).